The sequence spans 383 residues: Serine protease 23 (383 aa).

Residues 1–19 (MAGIPGLLFLLFFLLCAVG) form the signal peptide. An N-linked (GlcNAc...) asparagine glycan is attached at Asn-93. Ser-109 is subject to Phosphoserine; by FAM20C. Cys-160 and Cys-176 form a disulfide bridge. Residue His-175 is the Charge relay system of the active site. N-linked (GlcNAc...) asparagine glycosylation occurs at Asn-207. Catalysis depends on charge relay system residues Asp-240 and Ser-316.

This sequence belongs to the peptidase S1 family.

Its subcellular location is the secreted. This Homo sapiens (Human) protein is Serine protease 23 (PRSS23).